The chain runs to 393 residues: Protein Njmu-R1 (393 aa).

Residues Met1–Ser74 form a disordered region. 2 positions are modified to phosphoserine: Ser8 and Ser18. A compositionally biased stretch (acidic residues) spans Leu9–Ser24.

In terms of assembly, interacts with TBC1D23; this interaction may be indirect.

Functionally, may have a role in spermatogenesis. This chain is Protein Njmu-R1, found in Mus musculus (Mouse).